The chain runs to 80 residues: U19-lycotoxin-Ls1b (80 aa).

Positions 1-22 (MSPKVQALIFIVGLITLLAAHA) are cleaved as a signal peptide. A propeptide spanning residues 23–34 (QEELSDNIESER) is cleaved from the precursor. 4 disulfide bridges follow: C36/C50, C43/C55, C49/C66, and C57/C64.

Belongs to the neurotoxin 02 (plectoxin) family. 05 (U19-lycotoxin) subfamily. In terms of tissue distribution, expressed by the venom gland.

It is found in the secreted. The protein is U19-lycotoxin-Ls1b of Lycosa singoriensis (Wolf spider).